A 185-amino-acid chain; its full sequence is Endoribonuclease YbeY (185 aa).

Residues His142, His146, and His152 each coordinate Zn(2+).

The protein belongs to the endoribonuclease YbeY family. It depends on Zn(2+) as a cofactor.

The protein resides in the cytoplasm. In terms of biological role, single strand-specific metallo-endoribonuclease involved in late-stage 70S ribosome quality control and in maturation of the 3' terminus of the 16S rRNA. This Parvibaculum lavamentivorans (strain DS-1 / DSM 13023 / NCIMB 13966) protein is Endoribonuclease YbeY.